A 1150-amino-acid chain; its full sequence is Fl(2)d-associated complex component (1150 aa).

The span at 1–10 shows a compositional bias: basic and acidic residues; the sequence is MEKKAKESLR. Disordered stretches follow at residues 1-444, 477-710, 833-914, and 1034-1053; these read MEKK…EEER, QGRE…PPPL, ASED…MDTN, and KEQGQQRELDGDEEPPAKIP. Over residues 11-20 the composition is skewed to basic residues; that stretch reads RYKKAARHSA. The segment covering 21–44 has biased composition (low complexity); it reads THSSSSDSTSDSDSGSSSYSSTDS. Over residues 47 to 69 the composition is skewed to gly residues; the sequence is GVGGVGVGVGVPGGAGGPGGSGS. Residues 72 to 97 are compositionally biased toward basic residues; the sequence is GHPHTHGHGHHPRSAERHHRKKKSSR. Residues 98–107 are compositionally biased toward low complexity; that stretch reads RGGSSSGDEP. 2 stretches are compositionally biased toward basic residues: residues 110 to 144 and 162 to 175; these read SRRKRDKRDHVQKKLVAKRNHIKRKLKEARLKKRA and AKLKKLAERKRLRA. Positions 122-147 form a coiled coil; it reads KKLVAKRNHIKRKLKEARLKKRAAAA. Residues 176–199 show a composition bias toward basic and acidic residues; the sequence is ASKEQRERDKLRVVQRDRERDHHR. Residues 202–215 are compositionally biased toward low complexity; the sequence is SSRSPPSSSTTTTT. Positions 269-347 form a coiled coil; sequence PSLERERERE…KLRRQEEEEG (79 aa). Basic and acidic residues-rich tracts occupy residues 270–414, 428–444, and 492–529; these read SLER…DEMR, YAPRLRDPRELYSEEER, and PDERERLIRDRERDRERERDRERERNIGPRGDFRPEWE. The span at 537–558 shows a compositional bias: gly residues; the sequence is AGGGPGGPSGTPGRPGGFVGGP. 2 stretches are compositionally biased toward basic and acidic residues: residues 589–611 and 630–640; these read ERERERERERDRERERDREDRPD and WLEHDQREKPR. Pro residues predominate over residues 660 to 669; it reads PPAPSHPHPA. The span at 693-702 shows a compositional bias: basic and acidic residues; that stretch reads GHGDHGERPG. The segment covering 851–861 has biased composition (low complexity); the sequence is QSLNLNQSLSS. The span at 879–889 shows a compositional bias: acidic residues; it reads ELSEISDSDDD. Residues 890 to 903 show a composition bias toward basic and acidic residues; it reads ILNKTDKVRPKNEL. The span at 905–914 shows a compositional bias: acidic residues; the sequence is TETEQEMDTN.

The protein belongs to the ZC3H13 family. As to quaternary structure, component of the WMM complex, a N6-methyltransferase complex composed of a catalytic subcomplex, named MAC, and of an associated subcomplex, named MACOM. The MAC subcomplex is composed of Ime4/Mettl3 and Mettl14. The MACOM subcomplex is composed of fl(2)d, Flacc/Xio, Hakai, vir, and, in some cases of nito. Widely expressed during embryogenesis but shows enrichment in the neuroectoderm.

The protein resides in the nucleus. Associated component of the WMM complex, a complex that mediates N6-methyladenosine (m6A) methylation of mRNAs, a modification that plays a role in the efficiency of mRNA splicing and is required for sex determination. In the WMM complex, acts as a key regulator of m6A methylation by bridging fl(2)d to the RNA-binding component nito. Required for sex determination and dosage compensation via Sxl alternative splicing: m6A methylation acts as a key regulator of Sxl pre-mRNA and promotes female-specific alternative splicing of Sxl, which determines female physiognomy. This chain is Fl(2)d-associated complex component, found in Drosophila melanogaster (Fruit fly).